Here is a 449-residue protein sequence, read N- to C-terminus: Neurexin-1a-beta (449 aa).

The first 38 residues, 1–38, serve as a signal peptide directing secretion; sequence MLRLWPGGAPGGLASILLRISLRLALWLPPLTLGSALA. The Extracellular segment spans residues 39–373; sequence EGPGELYVPQ…EVIRESSSTT (335 aa). Residues 71–272 form the Laminin G-like domain; the sequence is TTYIFGRDGG…DPNVRVEGSA (202 aa). Positions 276–366 are disordered; sequence GDMPSSSITP…AKGYPSPEVI (91 aa). Low complexity predominate over residues 280 to 311; that stretch reads SSSITPQSSVSAAGNRSETSPSITDITTTTAS. Over residues 312–322 the composition is skewed to polar residues; it reads NRQGKQTTTPQ. The chain crosses the membrane as a helical span at residues 374-394; it reads GMVVGIVAAAALCILILLYAM. Residues 395-449 are Cytoplasmic-facing; that stretch reads YKYRNRDEGSYHVDESRNYISNSATQPNGAAVKEKPIGVPKNKKDKKNKDKEYYV. The tract at residues 415–449 is disordered; that stretch reads SNSATQPNGAAVKEKPIGVPKNKKDKKNKDKEYYV.

This sequence belongs to the neurexin family.

Its subcellular location is the membrane. In terms of biological role, neuronal cell surface protein that may be involved in cell recognition and cell adhesion. May play a role in formation or maintenance of synaptic junctions. This is Neurexin-1a-beta (nrxn1a) from Danio rerio (Zebrafish).